A 1240-amino-acid polypeptide reads, in one-letter code: Neurofascin (1240 aa).

A signal peptide spans 1–24 (MARQQAPPWVHIALILFLLSLGGA). At 25–1110 (IEIPMDPSIQ…NQADIATQGW (1086 aa)) the chain is on the extracellular side. 6 consecutive Ig-like C2-type domains span residues 41–137 (PTIT…LQVS), 143–230 (PKEN…NPFT), 244–332 (PSFM…ISVR), 337–424 (PYWL…AFVS), 430–517 (PRML…VRLE), and 521–603 (PTRI…QDLA). Cystine bridges form between cysteine 63-cysteine 118, cysteine 162-cysteine 213, cysteine 268-cysteine 316, and cysteine 358-cysteine 408. The N-linked (GlcNAc...) asparagine glycan is linked to asparagine 305. N-linked (GlcNAc...) asparagine glycosylation is found at asparagine 409 and asparagine 446. 2 disulfide bridges follow: cysteine 452–cysteine 501 and cysteine 543–cysteine 592. At tyrosine 481 the chain carries Phosphotyrosine. A glycan (N-linked (GlcNAc...) asparagine) is linked at asparagine 483. Serine 485 bears the Phosphoserine mark. Fibronectin type-III domains follow at residues 630–725 (RPRD…TSGA), 727–823 (PESN…SGED), 827–923 (APRR…PNEA), and 1007–1099 (APDE…TAYT). A disordered region spans residues 710 to 740 (SSHPSLPSERYRTSGAPPESNPSDVKGEGTR). Asparagine 752, asparagine 778, asparagine 866, and asparagine 881 each carry an N-linked (GlcNAc...) asparagine glycan. The interval 902 to 942 (ARTQVGSGEAATEESPAPPNEATPTAAPPTLPPTTVGTTGL) is disordered. Low complexity predominate over residues 907-916 (GSGEAATEES). The segment covering 917–933 (PAPPNEATPTAAPPTLP) has biased composition (pro residues). The chain crosses the membrane as a helical span at residues 1111–1131 (FIGLMCAIALLVLILLIVCFI). Residues 1132 to 1240 (KRSRGGKYPV…SPVNAIYSLA (109 aa)) lie on the Cytoplasmic side of the membrane. Residues 1141–1240 (VREKKDVPLG…SPVNAIYSLA (100 aa)) form a disordered region. The span at 1154-1165 (PKEEDGSFDYSD) shows a compositional bias: acidic residues. Serine 1160, serine 1174, serine 1187, serine 1190, serine 1226, serine 1227, and serine 1231 each carry phosphoserine. Over residues 1171 to 1184 (LQGSQTSLDGTIKQ) the composition is skewed to polar residues.

The protein belongs to the immunoglobulin superfamily. L1/neurofascin/NgCAM family. Horseshoe-shaped homodimer. Probable constituent of a NFASC/NRCAM/ankyrin-G complex. Associates with the sodium channel beta-1 (SCN1B) and beta-3 (SCN3B) subunits. Interacts with GLDN/gliomedin. Interacts with MYOC.

The protein localises to the cell membrane. In terms of biological role, cell adhesion, ankyrin-binding protein which may be involved in neurite extension, axonal guidance, synaptogenesis, myelination and neuron-glial cell interactions. The protein is Neurofascin (Nfasc) of Mus musculus (Mouse).